The sequence spans 404 residues: Argininosuccinate synthase (404 aa).

Residues 10–18 (AFSGGLDTS) and alanine 37 each bind ATP. L-citrulline contacts are provided by tyrosine 88 and serine 93. An ATP-binding site is contributed by glycine 118. L-aspartate is bound by residues threonine 120, asparagine 124, and aspartate 125. Position 124 (asparagine 124) interacts with L-citrulline. Arginine 128, serine 179, serine 188, glutamate 264, and tyrosine 276 together coordinate L-citrulline.

Belongs to the argininosuccinate synthase family. Type 1 subfamily. In terms of assembly, homotetramer.

The protein localises to the cytoplasm. The enzyme catalyses L-citrulline + L-aspartate + ATP = 2-(N(omega)-L-arginino)succinate + AMP + diphosphate + H(+). It functions in the pathway amino-acid biosynthesis; L-arginine biosynthesis; L-arginine from L-ornithine and carbamoyl phosphate: step 2/3. This Nitrosomonas eutropha (strain DSM 101675 / C91 / Nm57) protein is Argininosuccinate synthase.